The primary structure comprises 249 residues: CDP-diacylglycerol pyrophosphatase (249 aa).

Residues 5–25 (GYFLLAVIVIVAAAGVGYWKF) form a helical membrane-spanning segment.

The protein belongs to the Cdh family.

It is found in the cell inner membrane. It catalyses the reaction a CDP-1,2-diacyl-sn-glycerol + H2O = a 1,2-diacyl-sn-glycero-3-phosphate + CMP + 2 H(+). Its pathway is phospholipid metabolism; CDP-diacylglycerol degradation; phosphatidate from CDP-diacylglycerol: step 1/1. The chain is CDP-diacylglycerol pyrophosphatase from Salmonella arizonae (strain ATCC BAA-731 / CDC346-86 / RSK2980).